Reading from the N-terminus, the 149-residue chain is CCAAT/enhancer-binding protein gamma (149 aa).

A compositionally biased stretch (polar residues) spans 1-12 (MSKVSQQNSTPG). Residues 1–92 (MSKVSQQNST…SKQKAQDTLQ (92 aa)) are disordered. A Glycyl lysine isopeptide (Lys-Gly) (interchain with G-Cter in SUMO2) cross-link involves residue K3. Residues 28-37 (LQQVPQLVPA) show a composition bias toward low complexity. The segment covering 56–72 (SPMDRNSDEYRQRRERN) has biased composition (basic and acidic residues). Residues 62-125 (SDEYRQRRER…SVLKDLFLEH (64 aa)) form the bZIP domain. Residues 66 to 93 (RQRRERNNMAVKKSRLKSKQKAQDTLQR) form a basic motif region. The segment at 97 to 118 (LKEENERLEAKIKLLTKELSVL) is leucine-zipper. Positions 128–149 (NLADNVQPSSTENTTNPDKAGQ) are disordered. The segment covering 131-149 (DNVQPSSTENTTNPDKAGQ) has biased composition (polar residues).

Belongs to the bZIP family. C/EBP subfamily. Binds DNA as a dimer and can form stable heterodimers with CEBPA and CEBPB. Interacts with ZNF638; this interaction increases transcriptional activation.

The protein localises to the nucleus. Its function is as follows. Transcription factor that binds to the promoter and the enhancer regions of target genes. Binds to the enhancer element PRE-I (positive regulatory element-I) of the IL-4 gene. Binds to the promoter and the enhancer of the immunoglobulin heavy chain. Binds to GPE1, a cis-acting element in the G-CSF gene promoter. The chain is CCAAT/enhancer-binding protein gamma (CEBPG) from Bos taurus (Bovine).